We begin with the raw amino-acid sequence, 465 residues long: Ribosome biogenesis protein YTM1 (465 aa).

The ubiquitin-like (UBL) domain stretch occupies residues 18–99 (ARLRFSTRDE…ETTLDVEYVR (82 aa)). WD repeat units follow at residues 111-153 (LHDD…IHTS), 160-198 (GHQS…KGIT), 205-242 (GHKG…SPAV), 277-317 (GHTA…LVDT), 319-358 (TTSH…TTVS), 364-404 (GHTN…TDTD), and 427-465 (GDGV…PKTA). A disordered region spans residues 235 to 272 (KKSESPAVPQNLLPSSSARSSKRRKLNSSASTSQRGPL).

It belongs to the WD repeat WDR12/YTM1 family. In terms of assembly, component of the NOP7 complex, composed of ERB1, NOP7 and YTM1. The complex is held together by ERB1, which interacts with NOP7 via its N-terminal domain and with YTM1 via a high-affinity interaction between the seven-bladed beta-propeller domains of the 2 proteins. The NOP7 complex associates with the 66S pre-ribosome. Interacts (via UBL domain) with MDN1 (via VWFA/MIDAS domain).

It localises to the nucleus. Its subcellular location is the nucleolus. The protein localises to the nucleoplasm. Its function is as follows. Component of the NOP7 complex, which is required for maturation of the 25S and 5.8S ribosomal RNAs and formation of the 60S ribosome. This chain is Ribosome biogenesis protein YTM1, found in Coccidioides immitis (strain RS) (Valley fever fungus).